The following is a 1145-amino-acid chain: Nucleolar protein 6 (1145 aa).

Positions 1–46 (MQKKRNRAGPPQQEAASDDGEMSDSSDKMEVAQGKGKSAVKRAPDA) are disordered.

It belongs to the NRAP family. Part of the small subunit (SSU) processome, composed of more than 70 proteins and the RNA chaperone small nucleolar RNA (snoRNA) U3.

Its subcellular location is the nucleus. The protein resides in the nucleolus. It is found in the chromosome. Part of the small subunit (SSU) processome, first precursor of the small eukaryotic ribosomal subunit. During the assembly of the SSU processome in the nucleolus, many ribosome biogenesis factors, an RNA chaperone and ribosomal proteins associate with the nascent pre-rRNA and work in concert to generate RNA folding, modifications, rearrangements and cleavage as well as targeted degradation of pre-ribosomal RNA by the RNA exosome. The protein is Nucleolar protein 6 (nol6) of Xenopus tropicalis (Western clawed frog).